A 111-amino-acid chain; its full sequence is Secreted RxLR effector protein 81 (111 aa).

An N-terminal signal peptide occupies residues 1-16 (MLVSMLLIIFPNGVSL). An N-linked (GlcNAc...) asparagine glycan is attached at asparagine 52. The segment at 73–92 (KKFSSSDEDKSRDVRRRLRP) is disordered. A RxLR-dEER motif is present at residues 88–91 (RRLR).

The protein belongs to the RxLR effector family.

It is found in the secreted. The protein localises to the host nucleus. The protein resides in the host cytoplasm. Secreted effector that partially suppresses the host cell death induced by cell death-inducing proteins. This Plasmopara viticola (Downy mildew of grapevine) protein is Secreted RxLR effector protein 81.